A 237-amino-acid polypeptide reads, in one-letter code: Heme oxygenase (237 aa).

Residue His17 participates in heme b binding.

The protein belongs to the heme oxygenase family.

It is found in the plastid. The protein localises to the chloroplast. The enzyme catalyses heme b + 3 reduced [NADPH--hemoprotein reductase] + 3 O2 = biliverdin IXalpha + CO + Fe(2+) + 3 oxidized [NADPH--hemoprotein reductase] + 3 H2O + H(+). In terms of biological role, catalyzes the opening of the heme ring with the release of iron. Key enzyme in the synthesis of the chromophoric part of the photosynthetic antennae. The sequence is that of Heme oxygenase (pbsA) from Guillardia theta (Cryptophyte).